We begin with the raw amino-acid sequence, 130 residues long: Small ribosomal subunit protein uS11 (130 aa).

It belongs to the universal ribosomal protein uS11 family. Part of the 30S ribosomal subunit. Interacts with proteins S7 and S18. Binds to IF-3.

Functionally, located on the platform of the 30S subunit, it bridges several disparate RNA helices of the 16S rRNA. Forms part of the Shine-Dalgarno cleft in the 70S ribosome. This Prochlorococcus marinus (strain MIT 9312) protein is Small ribosomal subunit protein uS11.